A 1094-amino-acid polypeptide reads, in one-letter code: MTNTKYYPEVSSNADFAAIEREILKFWQDNNIFQKSIDDRNGESEFIFYDGPPFANGLPHYGHLLTGFIKDVYARYQTVKGKKVERRFGWDCHGLPAEMQSEKELGISGRLAITNFGIEKFNSHCRASVMKYASDWEEYVTRQARWVDFKNSYKTMDKNFMESVIWAFKELYNKGLLYESMRVMPYSWACETPLSNFETRLDNSYRERADKAVTVSFVLNEIPAINGMTSRESGTTSSGDYKEYRILAWTTTPWTLPSNLALAVGSDIDYASIPKEDICYIIAASSVSKYAKELGLSGEENFEIIKGSALQGLSYKPLFDYFANHPNSFKIFAGDFVVEGDGTGIVHMAPGFGEDDQILCESKGISLVCPVDNSGKFTKEIPDLEGVQVFDANDKIIIKLKEQGNWLKTEQYIHNYPHCWRTDTPLIYKAVPSWYVKVTQFKDRMVELNQQINWIPFHVKDNLFGKWLENARDWSISRNRFWGTPLPVWKSDDPKYPRIDVYGSIEELEKDFGVKVTDLHRPFIDELARPNPNDPTGKSTMRRIEDVFDCWFESGSMPYGQAHYPFENKKWFEDHFPADFIVEYSAQTRGWFYTLMVLSTALFDRPPFLNCICHGVILDATGQKLSKRLNNYADPLELFDKYGSDALRVTMLSSNVVKGQELLIDKDGKMVFDTLRLFIKPIWNAYHFFTMYANADSLKGELNFASQNVLDIYILSKLKIAVNKIEESLDNFDTQTAYHAVSEFFEVLNNWYIRRSRARFWKSEKDADKQNAYNTLYSCLETMAIAMSALVPMISEAIYLGLCHKRPDVIARKDLSLDEAISGNSHEIATALSVPRNDGSISVHLCNYPNLSSFEINHELVATMDNVLDICSNSLFIRSTENIRVRQPLATITIISKHNDKLKSFEDLIKDEINVKSVIYRDDLENYASKKLSINFPMLGKRLPAKMKEIIAASKKGEWEAIGGGLAICDETLNSDEYKLVLEPHVHIKGAASFENNSSLLILDLELTAELIEEGYARDIVRFIQQARKDADFSITDRILIEIISEFDLSKIIDNYGDFIKEQTLGEFSKNFTPDYVSKVELENHQIQLKVKRS.

Positions 53–63 match the 'HIGH' region motif; sequence PFANGLPHYGH. Residues 624 to 628 carry the 'KMSKS' region motif; that stretch reads KLSKR. K627 is an ATP binding site.

The protein belongs to the class-I aminoacyl-tRNA synthetase family. IleS type 2 subfamily. As to quaternary structure, monomer. It depends on Zn(2+) as a cofactor.

It localises to the cytoplasm. The enzyme catalyses tRNA(Ile) + L-isoleucine + ATP = L-isoleucyl-tRNA(Ile) + AMP + diphosphate. Catalyzes the attachment of isoleucine to tRNA(Ile). As IleRS can inadvertently accommodate and process structurally similar amino acids such as valine, to avoid such errors it has two additional distinct tRNA(Ile)-dependent editing activities. One activity is designated as 'pretransfer' editing and involves the hydrolysis of activated Val-AMP. The other activity is designated 'posttransfer' editing and involves deacylation of mischarged Val-tRNA(Ile). The polypeptide is Isoleucine--tRNA ligase (Rickettsia felis (strain ATCC VR-1525 / URRWXCal2) (Rickettsia azadi)).